The chain runs to 253 residues: Cell division protein ZapD (253 aa).

It belongs to the ZapD family. In terms of assembly, interacts with FtsZ.

It localises to the cytoplasm. Functionally, cell division factor that enhances FtsZ-ring assembly. Directly interacts with FtsZ and promotes bundling of FtsZ protofilaments, with a reduction in FtsZ GTPase activity. The protein is Cell division protein ZapD of Bordetella bronchiseptica (strain ATCC BAA-588 / NCTC 13252 / RB50) (Alcaligenes bronchisepticus).